The chain runs to 581 residues: MEVNSKPGILKRIAGPVVTAVDLDAHMYDVVKVGNEELMGEVIKIDGADTVIQVYESTTGIRPGEPVINTGLSLAVELGPGLLTSIYDGIQRPLEVLIQKMGNFIARGVTAPGLDHEKKWTFKPVVHVGDNVVPGQIVGEVQETRSIVHKIMVPPLAKGGKVTKINAGDFTVDEIVIELDSGESFPMMQKWPVRVPRPYVEKHSPSIPLLTGQRILDGLFPIAKGGTAAIPGPFGSGKTVTQQQLAKWSDAEIVVYIGCGERGNEMTEVLTEFPELQDPKTGNSLMERTILIANTSNMPVAAREASVYTGITLAEYFRDMGYDVALMADSTSRWAEAMREICSRLEEMPGEEGYPAYLSSRLSEFYERAGLVEPLAGGSGSVSVIGAVSPAGGDFSEPVTQNTLRIVKVFWALDANLSRRRHFPAINWLQSYSLYMAQLNDYYDEKVSPDWNKLRSWFMEVLQKEAELQEIVQLVGSDALPETEQITIEVARMMRELFLQQNGFDPVDTYCDLPKQLDMFKMIRTYADLAYAAQAAGVPPSQILAVKAKNEMPQVKFTKDYKPVLDKIYAGMEAEFKALRA.

Residue G232 to T239 coordinates ATP.

The protein belongs to the ATPase alpha/beta chains family. As to quaternary structure, has multiple subunits with at least A(3), B(3), C, D, E, F, H, I and proteolipid K(x).

The protein localises to the cell membrane. The enzyme catalyses ATP + H2O + 4 H(+)(in) = ADP + phosphate + 5 H(+)(out). Component of the A-type ATP synthase that produces ATP from ADP in the presence of a proton gradient across the membrane. The A chain is the catalytic subunit. This chain is A-type ATP synthase subunit A, found in Methanocorpusculum labreanum (strain ATCC 43576 / DSM 4855 / Z).